A 148-amino-acid polypeptide reads, in one-letter code: Urease accessory protein UreE (148 aa).

It belongs to the UreE family.

The protein resides in the cytoplasm. Functionally, involved in urease metallocenter assembly. Binds nickel. Probably functions as a nickel donor during metallocenter assembly. The polypeptide is Urease accessory protein UreE (Aliarcobacter butzleri (strain RM4018) (Arcobacter butzleri)).